A 356-amino-acid chain; its full sequence is Histidinol-phosphate aminotransferase (356 aa).

An N6-(pyridoxal phosphate)lysine modification is found at Lys214.

Belongs to the class-II pyridoxal-phosphate-dependent aminotransferase family. Histidinol-phosphate aminotransferase subfamily. As to quaternary structure, homodimer. The cofactor is pyridoxal 5'-phosphate.

The catalysed reaction is L-histidinol phosphate + 2-oxoglutarate = 3-(imidazol-4-yl)-2-oxopropyl phosphate + L-glutamate. It participates in amino-acid biosynthesis; L-histidine biosynthesis; L-histidine from 5-phospho-alpha-D-ribose 1-diphosphate: step 7/9. The polypeptide is Histidinol-phosphate aminotransferase (Escherichia coli O81 (strain ED1a)).